A 286-amino-acid chain; its full sequence is 4-diphosphocytidyl-2-C-methyl-D-erythritol kinase (286 aa).

The active site involves lysine 10. Residue proline 94–serine 104 coordinates ATP. Aspartate 136 is a catalytic residue.

The protein belongs to the GHMP kinase family. IspE subfamily.

It carries out the reaction 4-CDP-2-C-methyl-D-erythritol + ATP = 4-CDP-2-C-methyl-D-erythritol 2-phosphate + ADP + H(+). It participates in isoprenoid biosynthesis; isopentenyl diphosphate biosynthesis via DXP pathway; isopentenyl diphosphate from 1-deoxy-D-xylulose 5-phosphate: step 3/6. Functionally, catalyzes the phosphorylation of the position 2 hydroxy group of 4-diphosphocytidyl-2C-methyl-D-erythritol. The chain is 4-diphosphocytidyl-2-C-methyl-D-erythritol kinase from Exiguobacterium sibiricum (strain DSM 17290 / CCUG 55495 / CIP 109462 / JCM 13490 / 255-15).